The following is a 393-amino-acid chain: Asparagine--oxo-acid transaminase (393 aa).

3 residues coordinate L-asparagine: glycine 39, tryptophan 126, and asparagine 176. Lysine 239 carries the post-translational modification N6-(pyridoxal phosphate)lysine. An L-asparagine-binding site is contributed by arginine 370.

It belongs to the class-I pyridoxal-phosphate-dependent aminotransferase family. It depends on pyridoxal 5'-phosphate as a cofactor.

It carries out the reaction a 2-oxocarboxylate + L-asparagine = 2-oxosuccinamate + an L-alpha-amino acid. The enzyme catalyses L-asparagine + 2-oxoglutarate = 2-oxosuccinamate + L-glutamate. In terms of biological role, catalyzes the transamination reaction between L-asparagine and 2-oxoglutarate to produce L-glutamate and 2-oxosuccinamate. Is not active with pyruvate as amine acceptor. May also use other amino acids as substrates. In Streptococcus mutans serotype c (strain ATCC 700610 / UA159), this protein is Asparagine--oxo-acid transaminase.